The following is a 447-amino-acid chain: Argininosuccinate synthase (447 aa).

Residues 17-25 (AFSGGLDTS) and A43 each bind ATP. Y99 provides a ligand contact to L-citrulline. Residues G129 and T131 each contribute to the ATP site. Residues T131, N135, and D136 each coordinate L-aspartate. N135 provides a ligand contact to L-citrulline. D136 is a binding site for ATP. Positions 139 and 192 each coordinate L-citrulline. D194 serves as a coordination point for ATP. L-citrulline is bound by residues T201, E203, and E280.

Belongs to the argininosuccinate synthase family. Type 2 subfamily. As to quaternary structure, homotetramer.

It is found in the cytoplasm. It catalyses the reaction L-citrulline + L-aspartate + ATP = 2-(N(omega)-L-arginino)succinate + AMP + diphosphate + H(+). The protein operates within amino-acid biosynthesis; L-arginine biosynthesis; L-arginine from L-ornithine and carbamoyl phosphate: step 2/3. The sequence is that of Argininosuccinate synthase from Escherichia coli O139:H28 (strain E24377A / ETEC).